The following is a 118-amino-acid chain: Large ribosomal subunit protein uL18 (118 aa).

The protein belongs to the universal ribosomal protein uL18 family. In terms of assembly, part of the 50S ribosomal subunit; part of the 5S rRNA/L5/L18/L25 subcomplex. Contacts the 5S and 23S rRNAs.

This is one of the proteins that bind and probably mediate the attachment of the 5S RNA into the large ribosomal subunit, where it forms part of the central protuberance. This chain is Large ribosomal subunit protein uL18, found in Cupriavidus pinatubonensis (strain JMP 134 / LMG 1197) (Cupriavidus necator (strain JMP 134)).